The sequence spans 244 residues: Transcriptional activator protein FnrA (244 aa).

The HTH crp-type domain maps to 159–232 (KTADERIATF…GKEVRILDSI (74 aa)). The segment at residues 192–211 (RNEIGNYLGLAVETVSRVFT) is a DNA-binding region (H-T-H motif).

Functionally, transcriptional regulator of arginine deiminase. This chain is Transcriptional activator protein FnrA (fnrA), found in Stutzerimonas stutzeri (Pseudomonas stutzeri).